We begin with the raw amino-acid sequence, 217 residues long: Cytidylate kinase (217 aa).

9–17 (GPSSSGKSS) provides a ligand contact to ATP.

This sequence belongs to the cytidylate kinase family. Type 1 subfamily.

It is found in the cytoplasm. It carries out the reaction CMP + ATP = CDP + ADP. It catalyses the reaction dCMP + ATP = dCDP + ADP. This is Cytidylate kinase from Mycoplasma genitalium (strain ATCC 33530 / DSM 19775 / NCTC 10195 / G37) (Mycoplasmoides genitalium).